The sequence spans 464 residues: Chromosomal replication initiator protein DnaA (464 aa).

The domain I, interacts with DnaA modulators stretch occupies residues 1 to 82 (MSLSLWQQCL…LLRFEVGSKP (82 aa)). Positions 82–127 (PPQMAVLQPASQHASEAPSQAAVARPRPSRPSWDNAPVQPELSYRS) are domain II. The disordered stretch occupies residues 91-118 (ASQHASEAPSQAAVARPRPSRPSWDNAP). Positions 128 to 344 (NVNPKHNFDN…GALNRVIANA (217 aa)) are domain III, AAA+ region. ATP-binding residues include G172, G174, K175, and T176. Positions 345–464 (NFTGRAITID…FSNLIRTLSS (120 aa)) are domain IV, binds dsDNA.

This sequence belongs to the DnaA family. In terms of assembly, oligomerizes as a right-handed, spiral filament on DNA at oriC.

The protein resides in the cytoplasm. Functionally, plays an essential role in the initiation and regulation of chromosomal replication. ATP-DnaA binds to the origin of replication (oriC) to initiate formation of the DNA replication initiation complex once per cell cycle. Binds the DnaA box (a 9 base pair repeat at the origin) and separates the double-stranded (ds)DNA. Forms a right-handed helical filament on oriC DNA; dsDNA binds to the exterior of the filament while single-stranded (ss)DNA is stabiized in the filament's interior. The ATP-DnaA-oriC complex binds and stabilizes one strand of the AT-rich DNA unwinding element (DUE), permitting loading of DNA polymerase. After initiation quickly degrades to an ADP-DnaA complex that is not apt for DNA replication. Binds acidic phospholipids. The sequence is that of Chromosomal replication initiator protein DnaA from Sodalis glossinidius (strain morsitans).